Consider the following 300-residue polypeptide: Cytochrome f (300 aa).

The N-terminal stretch at 1 to 32 (MMTYLSKQFSKLLFGQLLFLFIGNLLLKPVQA) is a signal peptide. Heme-binding residues include tyrosine 33, cysteine 53, cysteine 56, and histidine 57. Residues 267 to 287 (LKTFIAFCVTVFIGQLAFVLK) form a helical membrane-spanning segment.

It belongs to the cytochrome f family. The 4 large subunits of the cytochrome b6-f complex are cytochrome b6, subunit IV (17 kDa polypeptide, petD), cytochrome f and the Rieske protein, while the 4 small subunits are PetG, PetL, PetM and PetN. The complex functions as a dimer. The cofactor is heme.

Its subcellular location is the plastid. The protein resides in the chloroplast thylakoid membrane. Component of the cytochrome b6-f complex, which mediates electron transfer between photosystem II (PSII) and photosystem I (PSI), cyclic electron flow around PSI, and state transitions. The chain is Cytochrome f from Cyanidioschyzon merolae (strain NIES-3377 / 10D) (Unicellular red alga).